The following is a 776-amino-acid chain: Venom dipeptidyl peptidase 4 (776 aa).

A signal peptide spans 1-19; sequence MVPLRSFVLLNGLFFVLLA. N-linked (GlcNAc...) asparagine glycosylation is found at Asn-44, Asn-66, and Asn-329. Intrachain disulfides connect Cys-449–Cys-452 and Cys-462–Cys-480. N-linked (GlcNAc...) asparagine glycans are attached at residues Asn-504 and Asn-577. Residue Ser-638 is the Charge relay system of the active site. Cys-658 and Cys-769 form a disulfide bridge. Asn-693 carries an N-linked (GlcNAc...) asparagine glycan. Active-site charge relay system residues include Asp-717 and His-749.

This sequence belongs to the peptidase S9B family. DPPIV subfamily. In terms of tissue distribution, expressed by the venom gland.

It is found in the secreted. It carries out the reaction Release of an N-terminal dipeptide, Xaa-Yaa-|-Zaa-, from a polypeptide, preferentially when Yaa is Pro, provided Zaa is neither Pro nor hydroxyproline.. Its function is as follows. Venom dipeptidyl-peptidase which removes N-terminal dipeptides sequentially from polypeptides having unsubstituted N-termini provided that the penultimate residue is proline. May process venom proteins into their active forms and/or modulate the chemotactic activity of immune cells after the insect sting. The sequence is that of Venom dipeptidyl peptidase 4 from Vespa velutina (Asian yellow-legged hornet).